A 361-amino-acid chain; its full sequence is PTI1-like tyrosine-protein kinase At3g15890 (361 aa).

Residues 39 to 328 (FNYDNKLGEG…ISELEANPLF (290 aa)) form the Protein kinase domain. Residues 45 to 53 (LGEGRFGSV) and K67 each bind ATP. The active-site Proton acceptor is D165. Disordered stretches follow at residues 195–219 (TGDG…SGKE) and 323–361 (EANP…QQQE). Basic and acidic residues predominate over residues 351 to 361 (LEDKDHQQQQE).

Belongs to the protein kinase superfamily. Tyr protein kinase family.

The catalysed reaction is L-tyrosyl-[protein] + ATP = O-phospho-L-tyrosyl-[protein] + ADP + H(+). This Arabidopsis thaliana (Mouse-ear cress) protein is PTI1-like tyrosine-protein kinase At3g15890.